The chain runs to 580 residues: Multidrug resistance-like ATP-binding protein MdlB (580 aa).

In terms of domain architecture, ABC transmembrane type-1 spans 25 to 310 (IILAFFLLLS…ITIQQSILQQ (286 aa)). 5 helical membrane passes run 26–46 (ILAF…PILI), 61–81 (FQLI…AVFF), 142–162 (VGPT…AMFT), 165–185 (WHMA…MSIY), and 258–278 (LLSA…SIGV). In terms of domain architecture, ABC transporter spans 341–575 (INIKNLSFKY…KGFYWKMYNF (235 aa)). 375-382 (GQTGSGKS) is an ATP binding site.

This sequence belongs to the ABC transporter superfamily. Drug exporter-2 (TC 3.A.1.117) family.

Its subcellular location is the cell membrane. It carries out the reaction ATP + H2O + xenobioticSide 1 = ADP + phosphate + xenobioticSide 2.. The polypeptide is Multidrug resistance-like ATP-binding protein MdlB (mdlB) (Buchnera aphidicola subsp. Schizaphis graminum (strain Sg)).